Consider the following 1216-residue polypeptide: DNA-directed RNA polymerase subunit beta (1216 aa).

A disordered region spans residues 1185–1216 (EEKQELPSQEYESLNLDQELKTASENVSESEF). The segment covering 1190 to 1216 (LPSQEYESLNLDQELKTASENVSESEF) has biased composition (polar residues).

Belongs to the RNA polymerase beta chain family. The RNAP catalytic core consists of 2 alpha, 1 beta, 1 beta' and 1 omega subunit. When a sigma factor is associated with the core the holoenzyme is formed, which can initiate transcription.

The catalysed reaction is RNA(n) + a ribonucleoside 5'-triphosphate = RNA(n+1) + diphosphate. Functionally, DNA-dependent RNA polymerase catalyzes the transcription of DNA into RNA using the four ribonucleoside triphosphates as substrates. In Mycoplasmopsis pulmonis (strain UAB CTIP) (Mycoplasma pulmonis), this protein is DNA-directed RNA polymerase subunit beta.